The chain runs to 405 residues: Phosphoglycerate kinase (405 aa).

Residues 21 to 23 (DFN), Arg36, 59 to 62 (HLGR), Arg119, and Arg161 each bind substrate. ATP-binding positions include Lys212, Gly301, Glu332, and 361 to 364 (GGDS).

The protein belongs to the phosphoglycerate kinase family. As to quaternary structure, monomer.

It is found in the cytoplasm. It catalyses the reaction (2R)-3-phosphoglycerate + ATP = (2R)-3-phospho-glyceroyl phosphate + ADP. Its pathway is carbohydrate degradation; glycolysis; pyruvate from D-glyceraldehyde 3-phosphate: step 2/5. The polypeptide is Phosphoglycerate kinase (Leuconostoc citreum (strain KM20)).